The following is a 140-amino-acid chain: DegV domain-containing 15.5 kDa protein (140 aa).

The DegV domain maps to 4-140 (QIIVTDSTSD…ELVLLQSKKI (137 aa)). 2 residues coordinate hexadecanoate: Thr-61 and Ser-93.

May bind long-chain fatty acids, such as palmitate, and may play a role in lipid transport or fatty acid metabolism. This is DegV domain-containing 15.5 kDa protein from Staphylococcus aureus.